The sequence spans 309 residues: Serine/threonine-protein phosphatase 2A catalytic subunit alpha isoform (309 aa).

Mn(2+)-binding residues include Asp-57, His-59, Asp-85, and Asn-117. Zn(2+) contacts are provided by Asp-57, His-59, and Asp-85. Asp-85 and Asn-117 together coordinate Fe(3+). Catalysis depends on His-118, which acts as the Proton donor. His-167 and His-241 together coordinate Mn(2+). 2 residues coordinate Fe(3+): His-167 and His-241. Position 307 is a phosphotyrosine (Tyr-307). The residue at position 309 (Leu-309) is a Leucine methyl ester.

It belongs to the PPP phosphatase family. PP-1 subfamily. In terms of assembly, PP2A consists of a common heterodimeric core enzyme composed of PPP2CA, a 36 kDa catalytic subunit (subunit C), and PPP2R1A, a 65 kDa constant regulatory subunit (PR65 or subunit A), that associates with a variety of regulatory subunits. Proteins that associate with the core dimer include three families of regulatory subunits B (the R2/B/PR55/B55, R3/B''/PR72/PR130/PR59 and R5/B'/B56 families), the 48 kDa variable regulatory subunit, viral proteins, and cell signaling molecules. Interacts with the PP2A A subunit PPP2R1A. Interacts with the regulatory subunit PPP2R2A. Interacts (via C-terminus) with PTPA. Interacts with NXN; the interaction is direct. Interacts with KCTD20. Interacts with BTBD10. Interacts with SGO1 and SGO2. Interacts with RAF1. Interaction with IGBP1 protects unassembled PPP2CA from degradative ubiquitination. Interacts with GSK3B (via C2 domain). Interacts with MFHAS1; retains PPP2CA into the cytoplasm and excludes it from the nucleus. Interacts with PABIR1/FAM122A. Interacts with ADCY8; interaction is phosphatase activity-dependent; antagonizes interaction between ADCY8 and calmodulin. Interacts with CRTC3 (when phosphorylated at 'Ser-391'). Interacts with SPRY2; the interaction is inhibited by TESK1 interaction with SPRY2, possibly by vesicular sequestration of SPRY2. Interacts with TRAF3IP3. Interacts with AMBRA1 (via PxP motifs); enhancing interaction between PPP2CA and MYC or FOXO3. Forms a complex with AMBRA1 and BECN1; AMBRA1 and BECN1 components of the complex regulate MYC stability via different pathways. Part of the core of STRIPAK complexes composed of PP2A catalytic and scaffolding subunits, the striatins (PP2A regulatory subunits), the striatin-associated proteins MOB4, STRIP1 and STRIP2, PDCD10 and members of the STE20 kinases, such as STK24 and STK26. Phosphatase component of the Integrator-PP2A (INTAC) complex, composed of the Integrator core complex and protein phosphatase 2A subunits PPP2CA and PPP2R1A. Mn(2+) serves as cofactor. It depends on Fe(3+) as a cofactor. The cofactor is Zn(2+). Post-translationally, reversibly methyl esterified on Leu-309 by leucine carboxyl methyltransferase 1 (LCMT1) and protein phosphatase methylesterase 1 (PPME1). Carboxyl methylation influences the affinity of the catalytic subunit for the different regulatory subunits, thereby modulating the PP2A holoenzyme's substrate specificity, enzyme activity and cellular localization. Phosphorylation of either threonine (by autophosphorylation-activated protein kinase) or tyrosine results in inactivation of the phosphatase. Auto-dephosphorylation has been suggested as a mechanism for reactivation. In terms of processing, polyubiquitinated, leading to its degradation by the proteasome.

It localises to the cytoplasm. The protein resides in the nucleus. The protein localises to the chromosome. It is found in the centromere. Its subcellular location is the cytoskeleton. It localises to the spindle pole. It catalyses the reaction O-phospho-L-seryl-[protein] + H2O = L-seryl-[protein] + phosphate. The catalysed reaction is O-phospho-L-threonyl-[protein] + H2O = L-threonyl-[protein] + phosphate. Its activity is regulated as follows. Inhibited by the interaction between PPP2R2A and ARPP19; this inhibition is enhanced when ARPP19 is phosphorylated. Inhibited by the interaction between PPP2R2A and PABIR1/FAM122A. Its function is as follows. Catalytic subunit of protein phosphatase 2A (PP2A), a serine/threonine phosphatase involved in the regulation of a wide variety of enzymes, signal transduction pathways, and cellular events. PP2A is the major phosphatase for microtubule-associated proteins (MAPs). PP2A can modulate the activity of phosphorylase B kinase casein kinase 2, mitogen-stimulated S6 kinase, and MAP-2 kinase. Cooperates with SGO2 to protect centromeric cohesin from separase-mediated cleavage in oocytes specifically during meiosis I. Can dephosphorylate various proteins, such as SV40 large T antigen, AXIN1, p53/TP53, PIM3, WEE1. Activates RAF1 by dephosphorylating it at 'Ser-259'. Mediates dephosphorylation of WEE1, preventing its ubiquitin-mediated proteolysis, increasing WEE1 protein levels, and promoting the G2/M checkpoint. Mediates dephosphorylation of MYC; promoting its ubiquitin-mediated proteolysis: interaction with AMBRA1 enhances interaction between PPP2CA and MYC. Mediates dephosphorylation of FOXO3; promoting its stabilization: interaction with AMBRA1 enhances interaction between PPP2CA and FOXO3. Catalyzes dephosphorylation of the pyrin domain of NLRP3, promoting assembly of the NLRP3 inflammasome. Together with RACK1 adapter, mediates dephosphorylation of AKT1 at 'Ser-473', preventing AKT1 activation and AKT-mTOR signaling pathway. Dephosphorylation of AKT1 is essential for regulatory T-cells (Treg) homeostasis and stability. Catalyzes dephosphorylation of PIM3, promotinh PIM3 ubiquitination and proteasomal degradation. Part of the striatin-interacting phosphatase and kinase (STRIPAK) complexes. STRIPAK complexes have critical roles in protein (de)phosphorylation and are regulators of multiple signaling pathways including Hippo, MAPK, nuclear receptor and cytoskeleton remodeling. Different types of STRIPAK complexes are involved in a variety of biological processes such as cell growth, differentiation, apoptosis, metabolism and immune regulation. Key mediator of a quality checkpoint during transcription elongation as part of the Integrator-PP2A (INTAC) complex. The INTAC complex drives premature transcription termination of transcripts that are unfavorably configured for transcriptional elongation: within the INTAC complex, PPP2CA catalyzes dephosphorylation of the C-terminal domain (CTD) of Pol II subunit POLR2A/RPB1 and SUPT5H/SPT5, thereby preventing transcriptional elongation. This is Serine/threonine-protein phosphatase 2A catalytic subunit alpha isoform (PPP2CA) from Homo sapiens (Human).